The primary structure comprises 1069 residues: Carbamoyl phosphate synthase large chain (1069 aa).

Residues 1 to 401 (MPLNKDIKRV…AFLKGIRSLE (401 aa)) are carboxyphosphate synthetic domain. ATP is bound by residues Arg129, Arg169, Gly175, Gly176, Lys208, Val210, Glu215, Gly241, Ile242, His243, Gln284, and Glu298. The ATP-grasp 1 domain maps to 133-327 (RDMMNRIGEP…IAKLAAKIAL (195 aa)). The Mg(2+) site is built by Gln284, Glu298, and Asn300. Residues Gln284, Glu298, and Asn300 each coordinate Mn(2+). The interval 402–549 (IGKYSLDHKK…YSTYEQYDEV (148 aa)) is oligomerization domain. The interval 550–932 (EVSNRRKVIV…ALYKGFVGAN (383 aa)) is carbamoyl phosphate synthetic domain. One can recognise an ATP-grasp 2 domain in the interval 674–864 (DELLERLDIS…IVDIATQVML (191 aa)). The ATP site is built by Arg710, Lys749, Leu751, Glu755, Gly780, Val781, His782, Ser783, Gln823, and Glu835. 3 residues coordinate Mg(2+): Gln823, Glu835, and Asn837. Gln823, Glu835, and Asn837 together coordinate Mn(2+). The region spanning 932–1069 (NMYPSKEKGK…KDLEVFDITK (138 aa)) is the MGS-like domain. The interval 933 to 1069 (MYPSKEKGKI…KDLEVFDITK (137 aa)) is allosteric domain.

Belongs to the CarB family. In terms of assembly, composed of two chains; the small (or glutamine) chain promotes the hydrolysis of glutamine to ammonia, which is used by the large (or ammonia) chain to synthesize carbamoyl phosphate. Tetramer of heterodimers (alpha,beta)4. Mg(2+) serves as cofactor. Mn(2+) is required as a cofactor.

It catalyses the reaction hydrogencarbonate + L-glutamine + 2 ATP + H2O = carbamoyl phosphate + L-glutamate + 2 ADP + phosphate + 2 H(+). The catalysed reaction is hydrogencarbonate + NH4(+) + 2 ATP = carbamoyl phosphate + 2 ADP + phosphate + 2 H(+). It participates in amino-acid biosynthesis; L-arginine biosynthesis; carbamoyl phosphate from bicarbonate: step 1/1. Its pathway is pyrimidine metabolism; UMP biosynthesis via de novo pathway; (S)-dihydroorotate from bicarbonate: step 1/3. Its function is as follows. Large subunit of the glutamine-dependent carbamoyl phosphate synthetase (CPSase). CPSase catalyzes the formation of carbamoyl phosphate from the ammonia moiety of glutamine, carbonate, and phosphate donated by ATP, constituting the first step of 2 biosynthetic pathways, one leading to arginine and/or urea and the other to pyrimidine nucleotides. The large subunit (synthetase) binds the substrates ammonia (free or transferred from glutamine from the small subunit), hydrogencarbonate and ATP and carries out an ATP-coupled ligase reaction, activating hydrogencarbonate by forming carboxy phosphate which reacts with ammonia to form carbamoyl phosphate. This is Carbamoyl phosphate synthase large chain from Clostridium botulinum (strain Alaska E43 / Type E3).